The primary structure comprises 99 residues: Plastocyanin (99 aa).

The 99-residue stretch at 1–99 folds into the Plastocyanin-like domain; sequence VEVLMGGSGG…IGMSGIVTVN (99 aa). Cu cation-binding residues include His-37, Cys-84, His-87, and Met-92.

It belongs to the plastocyanin family. It depends on Cu(2+) as a cofactor.

The protein localises to the plastid. It is found in the chloroplast thylakoid membrane. Participates in electron transfer between P700 and the cytochrome b6-f complex in photosystem I. The protein is Plastocyanin (PETE) of Ginkgo biloba (Ginkgo).